The following is a 415-amino-acid chain: Plasminogen activator inhibitor 2, macrophage (415 aa).

N-linked (GlcNAc...) asparagine glycosylation is found at asparagine 23, asparagine 75, asparagine 261, and asparagine 339.

This sequence belongs to the serpin family. Ov-serpin subfamily. Interacts with PSMB1. Post-translationally, the signal sequence is not cleaved.

The protein localises to the cytoplasm. The protein resides in the secreted. It is found in the extracellular space. In terms of biological role, inhibits urokinase-type plasminogen activator. The monocyte derived PAI-2 is distinct from the endothelial cell-derived PAI-1. Not required for normal murine development or survival. In Mus musculus (Mouse), this protein is Plasminogen activator inhibitor 2, macrophage (Serpinb2).